Consider the following 90-residue polypeptide: Small ribosomal subunit protein uS17 (90 aa).

The protein belongs to the universal ribosomal protein uS17 family. As to quaternary structure, part of the 30S ribosomal subunit.

Its function is as follows. One of the primary rRNA binding proteins, it binds specifically to the 5'-end of 16S ribosomal RNA. The sequence is that of Small ribosomal subunit protein uS17 from Paraburkholderia phytofirmans (strain DSM 17436 / LMG 22146 / PsJN) (Burkholderia phytofirmans).